A 132-amino-acid polypeptide reads, in one-letter code: Acyl-CoA thioester hydrolase YciA (132 aa).

The region spanning Pro-8 to Glu-123 is the HotDog ACOT-type domain.

Belongs to the acyl coenzyme A hydrolase family.

Functionally, catalyzes the hydrolysis of the thioester bond in palmitoyl-CoA and malonyl-CoA. The sequence is that of Acyl-CoA thioester hydrolase YciA (yciA) from Escherichia coli O6:H1 (strain CFT073 / ATCC 700928 / UPEC).